We begin with the raw amino-acid sequence, 308 residues long: Transcription factor zip-2 (308 aa).

Positions 217–229 are enriched in polar residues; that stretch reads QSSSSSTVETTIT. The segment at 217–277 is disordered; that stretch reads QSSSSSTVET…RESKEERERL (61 aa). In terms of domain architecture, bZIP spans 242–305; that stretch reads SSDYRHKRDK…EDYKRLVMMF (64 aa). Residues 246-276 are basic motif; the sequence is RHKRDKNNLASQKSRQKRQAKIRESKEERER. Over residues 266-277 the composition is skewed to basic and acidic residues; sequence KIRESKEERERL. A leucine-zipper region spans residues 277–291; sequence LEKRKVQLQAMVLTL.

Belongs to the bZIP family. C/EBP subfamily. In terms of tissue distribution, expressed in the pharynx and throughout the intestine.

It is found in the nucleus. Functionally, transcription factor that binds to the promoter and the enhancer regions of target genes. May act together with the bZIP transcription factor, cebp-2. Involved in responding to mitochondrial damage. Plays a role in the delay of age-associated mitochondrial fragmentation and muscle decline. Has a protective role in response to infection by the Gram-negative bacterium P.aeruginosa. Required to prevent P.aeruginosa ToxA-mediated lethality. Required for the activation of several infection response genes including irg-1 and irg-2 following P.aeruginosa infection; target gene activation may involve effects of the bacterial toxin, ToxA, and perhaps other toxins. The polypeptide is Transcription factor zip-2 (Caenorhabditis elegans).